Here is a 259-residue protein sequence, read N- to C-terminus: L-erythrulose-1-phosphate isomerase (259 aa).

H102 (electrophile) is an active-site residue. E174 (proton acceptor) is an active-site residue.

The protein belongs to the triosephosphate isomerase family.

It catalyses the reaction L-erythrulose 1-phosphate = D-erythrulose 4-phosphate. It participates in carbohydrate metabolism. Involved in catabolism of D-apiose. Catalyzes the isomerization of L-erythrulose 1-phosphate to D-erythrulose 4-phosphate. The sequence is that of L-erythrulose-1-phosphate isomerase from Pectobacterium atrosepticum (strain SCRI 1043 / ATCC BAA-672) (Erwinia carotovora subsp. atroseptica).